Consider the following 320-residue polypeptide: Putative cyclin-D7-1 (320 aa).

A disordered region spans residues 1 to 46 (MDDDDDTSFNNSLDLYCDEDPFDSTPPPPPPPPEQQQQAGTTTPDD). Pro residues predominate over residues 24 to 34 (STPPPPPPPPE). The span at 35–44 (QQQQAGTTTP) shows a compositional bias: low complexity.

It belongs to the cyclin family. Cyclin D subfamily.

In Oryza sativa subsp. japonica (Rice), this protein is Putative cyclin-D7-1 (CYCD7-1).